The following is a 205-amino-acid chain: Guanylyl cyclase-activating protein 1 (205 aa).

A lipid anchor (N-myristoyl glycine) is attached at G2. N3 bears the Deamidated asparagine mark. 4 EF-hand domains span residues 30–48 (SGQL…KNLS), 50–85 (ASNQ…VLKG), 86–121 (KVEQ…IRAI), and 129–164 (TAEE…DELL). Positions 63, 65, 67, 69, 74, 99, 101, 103, 105, 110, 142, 144, 146, 148, and 153 each coordinate Ca(2+).

In terms of tissue distribution, retina.

In terms of biological role, regulatory protein that inhibits guanylyl cyclase when free calcium ions concentration is elevated. This Ca(2+)-sensitive regulation of retinal guanylyl cyclase is a key event in recovery of the dark state of rod photoreceptors following light exposure. The sequence is that of Guanylyl cyclase-activating protein 1 (GUCA1A) from Lithobates pipiens (Northern leopard frog).